A 384-amino-acid chain; its full sequence is 1-deoxy-D-xylulose 5-phosphate reductoisomerase (384 aa).

NADPH contacts are provided by T10, G11, S12, I13, G36, N38, and N122. K123 is a binding site for 1-deoxy-D-xylulose 5-phosphate. E124 provides a ligand contact to NADPH. D148 is a binding site for Mn(2+). 4 residues coordinate 1-deoxy-D-xylulose 5-phosphate: S149, E150, S174, and H197. E150 provides a ligand contact to Mn(2+). An NADPH-binding site is contributed by G203. S210, N215, K216, and E219 together coordinate 1-deoxy-D-xylulose 5-phosphate. Position 219 (E219) interacts with Mn(2+).

The protein belongs to the DXR family. Requires Mg(2+) as cofactor. The cofactor is Mn(2+).

The catalysed reaction is 2-C-methyl-D-erythritol 4-phosphate + NADP(+) = 1-deoxy-D-xylulose 5-phosphate + NADPH + H(+). Its pathway is isoprenoid biosynthesis; isopentenyl diphosphate biosynthesis via DXP pathway; isopentenyl diphosphate from 1-deoxy-D-xylulose 5-phosphate: step 1/6. Functionally, catalyzes the NADPH-dependent rearrangement and reduction of 1-deoxy-D-xylulose-5-phosphate (DXP) to 2-C-methyl-D-erythritol 4-phosphate (MEP). The protein is 1-deoxy-D-xylulose 5-phosphate reductoisomerase of Geotalea daltonii (strain DSM 22248 / JCM 15807 / FRC-32) (Geobacter daltonii).